The following is a 496-amino-acid chain: MSVTVFNPRIDDAAASDITAVTPAVTALNELSSAQAPVKSATKKVFVTTQGCQMNVYDSGKMLDVLGDSHGMEVTHDIDEADVLLMNTCSIREKAQEKVFSELGRWRKLKEKRPDLVIGVGGCVASQEGDNIQKRAPYVDMVFGPQTLHRLPELYDQSHQQREIAPKNRIGTVDVSFPSIEKFDFLPEPRVEGFKAFVSIMEGCSKYCSFCVVPYTRGEELSRPLDDVLAEIDSLAAQGVREINLLGQNVNGYRGEKDDGNICRFAELLHYVSHVDGVERIRYTTSHPLEFTDDIIDAYAQLPELVSHLHLPVQSGSNTILAAMKRNHTIDVYINQINKLKAIRPDIHLSSDFIIGFPGETDQDFQDTLTLAKELNFDHSYSFIYSKRPGTPAAELPDDVSFKTKKERLAEFQKVIIDSTLAKTHEMVGTTTRVLVEQVANRHPDCLIGTADNTRTVMFPYAVDKMDELLGKIVSVRITDFVSPHMVKGEIEAVLA.

Residues 43–160 form the MTTase N-terminal domain; it reads KKVFVTTQGC…LPELYDQSHQ (118 aa). Residues Cys-52, Cys-89, Cys-123, Cys-204, Cys-208, and Cys-211 each contribute to the [4Fe-4S] cluster site. The 233-residue stretch at 190 to 422 folds into the Radical SAM core domain; sequence RVEGFKAFVS…QKVIIDSTLA (233 aa). The TRAM domain maps to 425 to 493; sequence HEMVGTTTRV…PHMVKGEIEA (69 aa).

Belongs to the methylthiotransferase family. MiaB subfamily. As to quaternary structure, monomer. It depends on [4Fe-4S] cluster as a cofactor.

The protein resides in the cytoplasm. It catalyses the reaction N(6)-dimethylallyladenosine(37) in tRNA + (sulfur carrier)-SH + AH2 + 2 S-adenosyl-L-methionine = 2-methylsulfanyl-N(6)-dimethylallyladenosine(37) in tRNA + (sulfur carrier)-H + 5'-deoxyadenosine + L-methionine + A + S-adenosyl-L-homocysteine + 2 H(+). Functionally, catalyzes the methylthiolation of N6-(dimethylallyl)adenosine (i(6)A), leading to the formation of 2-methylthio-N6-(dimethylallyl)adenosine (ms(2)i(6)A) at position 37 in tRNAs that read codons beginning with uridine. The sequence is that of tRNA-2-methylthio-N(6)-dimethylallyladenosine synthase from Psychrobacter arcticus (strain DSM 17307 / VKM B-2377 / 273-4).